The primary structure comprises 349 residues: UPF0324 inner membrane protein YeiH (349 aa).

Residues 1–12 (MTELTLQNHRRT) are Periplasmic-facing. Residues 13–35 (MWHFIPGLALSAVITGVALWGGA) form a helical membrane-spanning segment. The Cytoplasmic segment spans residues 36–38 (IPA). Residues 39-61 (VAGAGFSALTLAILLGMVIGNTV) traverse the membrane as a helical segment. Residues 62–99 (YPQIWKQCDGGVLFAKQHLLRLGIILYGFRLTFSQIAD) are Periplasmic-facing. Residues 100-122 (VGISGIVIDVLTLSSTFMLACFL) traverse the membrane as a helical segment. The Cytoplasmic segment spans residues 123–131 (GQKVFGLDR). Residues 132-151 (HTSWLIGAGSSICGAAAVLA) form a helical membrane-spanning segment. Over 152–162 (TEPVVKAEASK) the chain is Periplasmic. The chain crosses the membrane as a helical span at residues 163–185 (VTVAVATVVIFGTIAIFLYPAMY). The Cytoplasmic segment spans residues 186-261 (PLLAHWFSPE…SPATGAEKSK (76 aa)). Residues 262–284 (ITIPWFAIFFIVVAIFNSFHLLP) traverse the membrane as a helical segment. Residues 285-290 (KAVVDM) lie on the Periplasmic side of the membrane. Residues 291–313 (LVTLDTVLLAMAMAALGLTTHVS) traverse the membrane as a helical segment. Topologically, residues 314–322 (ALKKAGAKP) are cytoplasmic. A helical transmembrane segment spans residues 323–345 (LLMALALFAWLIIGGGAINVLIH). The Periplasmic portion of the chain corresponds to 346-349 (SLIA).

Belongs to the UPF0324 family.

The protein localises to the cell inner membrane. The polypeptide is UPF0324 inner membrane protein YeiH (yeiH) (Salmonella typhi).